We begin with the raw amino-acid sequence, 402 residues long: Protein indeterminate-domain 12 (402 aa).

A disordered region spans residues 47 to 66 (TETHKPKKKRGLPGNPDPDA). Residue Ser72 is modified to Phosphoserine. 2 consecutive C2H2-type zinc fingers follow at residues 82–104 (FVCE…RRGH) and 124–154 (YVCP…CRKH). A Nuclear localization signal motif is present at residues 146–153 (IKKHFCRK). The C2H2-type 2; degenerate zinc finger occupies 159–183 (WKCEKCSKFYAVQSDWKAHTKICGT). The Zn(2+) site is built by Cys161, Cys164, His177, Cys181, Cys188, Cys190, His203, and Cys207. The CCHC-type 2; atypical zinc-finger motif lies at 186 to 209 (YRCDCGTLFSRKDTFITHRAFCDA). Residues 196–208 (RKDTFITHRAFCD) are SHR-binding.

It is found in the nucleus. Its function is as follows. Probable transcription factor. The chain is Protein indeterminate-domain 12 from Arabidopsis thaliana (Mouse-ear cress).